A 906-amino-acid polypeptide reads, in one-letter code: Cadherin-2 (906 aa).

A signal peptide spans 1–25 (MCRIAGALRTLLPLLAALLQASVEA). A propeptide spanning residues 26 to 159 (SGEIALCKTG…HSGHLQRQKR (134 aa)) is cleaved from the precursor. 2 positions are modified to phosphoserine; by FAM20C: S96 and S135. Cadherin domains lie at 160–267 (DWVI…RPEF), 268–382 (LHQV…PPEF), 383–497 (TAMT…NPYF), 498–603 (APNP…DNAP), and 604–714 (QVLP…DVDR). Over 160 to 724 (DWVIPPINLP…IVGAGLGTGA (565 aa)) the chain is Extracellular. Residue E170 participates in Ca(2+) binding. N-linked (GlcNAc...) asparagine glycosylation is present at N190. Ca(2+)-binding residues include D226, E228, D259, M260, N261, D262, and N263. N273 is a glycosylation site (N-linked (GlcNAc...) asparagine). Positions 293, 295, and 301 each coordinate Ca(2+). N325 is a glycosylation site (N-linked (GlcNAc...) asparagine). Residue D353 participates in Ca(2+) binding. N-linked (GlcNAc...) asparagine glycans are attached at residues N402, N572, N651, and N692. Residues 725-745 (IIAILLCIIILLILVLMFVVW) traverse the membrane as a helical segment. Residues 746-906 (MKRRDKERQA…LADMYGGGDD (161 aa)) are Cytoplasmic-facing. Positions 863–880 (SGSTAGSLSSLNSSSSGG) are enriched in low complexity. The disordered stretch occupies residues 863–884 (SGSTAGSLSSLNSSSSGGEQDY).

In terms of assembly, homodimer (via extracellular region). Can also form heterodimers with other cadherins (via extracellular region). Dimerization occurs in trans, i.e. with a cadherin chain from another cell. Interacts with CDCP1. Interacts with PCDH8; this complex may also include TAOK2. The interaction with PCDH8 may lead to internalization through TAOK2/p38 MAPK pathway. Identified in a complex containing FGFR4, NCAM1, CDH2, PLCG1, FRS2, SRC, SHC1, GAP43 and CTTN. May interact with OBSCN (via protein kinase domain 2). Interacts with FBXO45. In terms of processing, cleaved by MMP24. Ectodomain cleavage leads to the generation of a soluble 90 kDa N-terminal soluble fragment and a 45 kDa membrane-bound C-terminal fragment 1 (CTF1), which is further cleaved by gamma-secretase into a 35 kDa. Cleavage in neural stem cells by MMP24 affects CDH2-mediated anchorage of neural stem cells to ependymocytes in the adult subependymal zone, leading to modulate neural stem cell quiescence. Post-translationally, may be phosphorylated by OBSCN.

The protein resides in the cell membrane. The protein localises to the sarcolemma. It localises to the cell junction. It is found in the cell surface. Its subcellular location is the desmosome. The protein resides in the adherens junction. Calcium-dependent cell adhesion protein; preferentially mediates homotypic cell-cell adhesion by dimerization with a CDH2 chain from another cell. Cadherins may thus contribute to the sorting of heterogeneous cell types. Acts as a regulator of neural stem cells quiescence by mediating anchorage of neural stem cells to ependymocytes in the adult subependymal zone: upon cleavage by MMP24, CDH2-mediated anchorage is affected, leading to modulate neural stem cell quiescence. Plays a role in cell-to-cell junction formation between pancreatic beta cells and neural crest stem (NCS) cells, promoting the formation of processes by NCS cells. Required for proper neurite branching. Required for pre- and postsynaptic organization. CDH2 may be involved in neuronal recognition mechanism. In hippocampal neurons, may regulate dendritic spine density. The sequence is that of Cadherin-2 (CDH2) from Homo sapiens (Human).